A 457-amino-acid chain; its full sequence is UDP-N-acetylmuramate--L-alanine ligase (457 aa).

Position 118-124 (118-124 (GTHGKTT)) interacts with ATP.

It belongs to the MurCDEF family.

The protein resides in the cytoplasm. The catalysed reaction is UDP-N-acetyl-alpha-D-muramate + L-alanine + ATP = UDP-N-acetyl-alpha-D-muramoyl-L-alanine + ADP + phosphate + H(+). Its pathway is cell wall biogenesis; peptidoglycan biosynthesis. Its function is as follows. Cell wall formation. The polypeptide is UDP-N-acetylmuramate--L-alanine ligase (Clostridium perfringens (strain 13 / Type A)).